Reading from the N-terminus, the 154-residue chain is Small ribosomal subunit protein uS9 (154 aa).

Disordered regions lie at residues 1–33 and 115–154; these read MVPP…SGLG and PENN…YSKR. Residues 135–154 show a composition bias toward basic residues; the sequence is KERKKAGLKKARKAPQYSKR.

Belongs to the universal ribosomal protein uS9 family.

The sequence is that of Small ribosomal subunit protein uS9 from Tropheryma whipplei (strain TW08/27) (Whipple's bacillus).